The primary structure comprises 560 residues: Cytosolic purine 5'-nucleotidase (560 aa).

Residue D52 is the Nucleophile of the active site. Residues D52 and D54 each coordinate IMP. D52 and D54 together coordinate Mg(2+). The active-site Proton donor is D54. 2 residues coordinate ATP: R144 and N154. Residues R202, D206, K215, T249, N250, S251, and K292 each contribute to the IMP site. D351 lines the Mg(2+) pocket. S418 is modified (phosphoserine). ATP contacts are provided by Q453 and R456. Phosphoserine occurs at positions 502, 511, and 527. Positions 541–560 (PQEITHCHDEDDDEEEEEEE) are disordered. The interval 548–560 (HDEDDDEEEEEEE) is required for tetramer assembly. Acidic residues predominate over residues 550–560 (EDDDEEEEEEE).

The protein belongs to the 5'(3')-deoxyribonucleotidase family. Homotetramer. It depends on Mg(2+) as a cofactor.

The protein localises to the cytoplasm. The protein resides in the cytosol. It carries out the reaction a ribonucleoside 5'-phosphate + H2O = a ribonucleoside + phosphate. The catalysed reaction is a 2'-deoxyribonucleoside + a ribonucleoside 5'-phosphate = a ribonucleoside + a 2'-deoxyribonucleoside 5'-phosphate. It catalyses the reaction IMP + H2O = inosine + phosphate. The enzyme catalyses GMP + H2O = guanosine + phosphate. It carries out the reaction dIMP + H2O = 2'-deoxyinosine + phosphate. The catalysed reaction is dGMP + H2O = 2'-deoxyguanosine + phosphate. It catalyses the reaction XMP + H2O = xanthosine + phosphate. The enzyme catalyses inosine + GMP = guanosine + IMP. It carries out the reaction dGMP + inosine = 2'-deoxyguanosine + IMP. The catalysed reaction is dIMP + inosine = 2'-deoxyinosine + IMP. It catalyses the reaction inosine + UMP = uridine + IMP. The enzyme catalyses inosine + CMP = cytidine + IMP. It carries out the reaction inosine + AMP = IMP + adenosine. Its activity is regulated as follows. Allosterically activated by various compounds including ATP, 2,3-BPG/2,3-Bisphosphoglyceric acid and Ap4A/P1,P4-bis(5'-adenosyl) tetraphosphate. Binding of an allosteric activator is a prerequisiste to magnesium and substrate binding. Inhibited by inorganic phosphate. Functionally, broad specificity cytosolic 5'-nucleotidase that catalyzes the dephosphorylation of 6-hydroxypurine nucleoside 5'-monophosphates. In addition, possesses a phosphotransferase activity by which it can transfer a phosphate from a donor nucleoside monophosphate to an acceptor nucleoside, preferably inosine, deoxyinosine and guanosine. Has the highest activities for IMP and GMP followed by dIMP, dGMP and XMP. Could also catalyze the transfer of phosphates from pyrimidine monophosphates but with lower efficiency. Through these activities regulates the purine nucleoside/nucleotide pools within the cell. This chain is Cytosolic purine 5'-nucleotidase, found in Rattus norvegicus (Rat).